The chain runs to 450 residues: Glycerol dehydrogenase 1 (450 aa).

Residues Asp99, 155–159 (GKTMD), and 177–180 (TTAS) each bind NAD(+). Substrate is bound at residue Asp182. 3 residues coordinate NAD(+): Ser186, Leu188, and Tyr192. Substrate contacts are provided by Asp232, His315, and His333. The Zn(2+) site is built by Asp232, His315, and His333.

The protein belongs to the iron-containing alcohol dehydrogenase family. The cofactor is Zn(2+).

The protein localises to the mitochondrion. The catalysed reaction is glycerol + NAD(+) = dihydroxyacetone + NADH + H(+). The protein operates within polyol metabolism; glycerol fermentation; glycerone phosphate from glycerol (oxidative route): step 1/2. Its function is as follows. Glycerol dehydrogenase involved in the assimilation of glycerol. The sequence is that of Glycerol dehydrogenase 1 (gld1) from Schizosaccharomyces pombe (strain 972 / ATCC 24843) (Fission yeast).